Here is a 519-residue protein sequence, read N- to C-terminus: Cytochrome P450 72C1 (519 aa).

Residues 10 to 30 (VFLIGFLILILNWVWRAVNWV) form a helical membrane-spanning segment. Cys467 is a heme binding site.

Belongs to the cytochrome P450 family. The cofactor is heme. In terms of tissue distribution, expressed in hypocotyls, roots, cotyledons, stamens and silique junctions.

It localises to the membrane. Atypical cytochrome P450 involved in brassinosteroids (BRs) inactivation and regulation of BRs homeostasis. Does not possess carbon 26 hydroxylase activity and may inactivate BRs by hydroxylation of carbons other than C-26. Acts in association with CYP734A1 to inactivate BRs and modulate photomorphogenesis. This Arabidopsis thaliana (Mouse-ear cress) protein is Cytochrome P450 72C1 (CYP72C1).